We begin with the raw amino-acid sequence, 287 residues long: Probable endoribonuclease YicC (287 aa).

This sequence belongs to the YicC/YloC family. A divalent metal cation is required as a cofactor.

In terms of biological role, probably a ssRNA endonuclease. Its function is as follows. Might contribute to small RNA (sRNA) regulation. This Haemophilus influenzae (strain ATCC 51907 / DSM 11121 / KW20 / Rd) protein is Probable endoribonuclease YicC.